We begin with the raw amino-acid sequence, 1036 residues long: Isoleucine--tRNA ligase (1036 aa).

The short motif at Pro-46–His-56 is the 'HIGH' region element. A 'KMSKS' region motif is present at residues Lys-589–Arg-593. Lys-592 lines the ATP pocket.

The protein belongs to the class-I aminoacyl-tRNA synthetase family. IleS type 2 subfamily. In terms of assembly, monomer. It depends on Zn(2+) as a cofactor.

It is found in the cytoplasm. The catalysed reaction is tRNA(Ile) + L-isoleucine + ATP = L-isoleucyl-tRNA(Ile) + AMP + diphosphate. Its function is as follows. Catalyzes the attachment of isoleucine to tRNA(Ile). As IleRS can inadvertently accommodate and process structurally similar amino acids such as valine, to avoid such errors it has two additional distinct tRNA(Ile)-dependent editing activities. One activity is designated as 'pretransfer' editing and involves the hydrolysis of activated Val-AMP. The other activity is designated 'posttransfer' editing and involves deacylation of mischarged Val-tRNA(Ile). The polypeptide is Isoleucine--tRNA ligase (Chlamydia trachomatis serovar L2b (strain UCH-1/proctitis)).